Consider the following 265-residue polypeptide: Probable cyclic nucleotide phosphodiesterase SynWH7803_1390 (265 aa).

Fe cation contacts are provided by D9, H11, D49, N86, H157, H196, and H198. Residues H11, D49, and 86-87 contribute to the AMP site; that span reads NH. H198 provides a ligand contact to AMP.

The protein belongs to the cyclic nucleotide phosphodiesterase class-III family. Fe(2+) is required as a cofactor.

The polypeptide is Probable cyclic nucleotide phosphodiesterase SynWH7803_1390 (Synechococcus sp. (strain WH7803)).